The chain runs to 470 residues: Adenosylhomocysteinase (470 aa).

3 residues coordinate substrate: Thr-61, Asp-136, and Glu-196. Position 197 to 199 (197 to 199 (TTT)) interacts with NAD(+). Residues Lys-226 and Asp-230 each coordinate substrate. NAD(+)-binding positions include Asn-231, 260–265 (GYGDVG), Glu-283, Asn-318, 339–341 (IGH), and Asn-384.

The protein belongs to the adenosylhomocysteinase family. It depends on NAD(+) as a cofactor.

It is found in the cytoplasm. It carries out the reaction S-adenosyl-L-homocysteine + H2O = L-homocysteine + adenosine. Its pathway is amino-acid biosynthesis; L-homocysteine biosynthesis; L-homocysteine from S-adenosyl-L-homocysteine: step 1/1. May play a key role in the regulation of the intracellular concentration of adenosylhomocysteine. This chain is Adenosylhomocysteinase, found in Aromatoleum aromaticum (strain DSM 19018 / LMG 30748 / EbN1) (Azoarcus sp. (strain EbN1)).